Consider the following 113-residue polypeptide: Putative pterin-4-alpha-carbinolamine dehydratase (113 aa).

Belongs to the pterin-4-alpha-carbinolamine dehydratase family.

The enzyme catalyses (4aS,6R)-4a-hydroxy-L-erythro-5,6,7,8-tetrahydrobiopterin = (6R)-L-erythro-6,7-dihydrobiopterin + H2O. In Legionella pneumophila (strain Paris), this protein is Putative pterin-4-alpha-carbinolamine dehydratase.